The following is a 305-amino-acid chain: Aquaporin-1 (305 aa).

The disordered stretch occupies residues 1 to 34 (MSSNDSNDTDKQHTRLDPTGVDDAYIPPEQPETK). The Cytoplasmic segment spans residues 1–48 (MSSNDSNDTDKQHTRLDPTGVDDAYIPPEQPETKHHRFKISKDTLRNH). A helical transmembrane segment spans residues 49–69 (FIAAAGEFCGTFMFLWCAYVI). Topologically, residues 70 to 91 (CNVANHDVALVAAPDGSHPGQL) are extracellular. Residues 92–112 (IMIAIGFGFSVMFSIWCFAGV) form a helical membrane-spanning segment. Residues 113-136 (SGGALNPAMSLSLCLARAVSPTRC) lie on the Cytoplasmic side of the membrane. Residues 118–120 (NPA) carry the NPA 1 motif. Residues 137–157 (VVMWVSQIVAGMAAGGAASAM) traverse the membrane as a helical segment. Residues 158-176 (TPGEVLFANSLGLGCSRTR) are Extracellular-facing. A helical transmembrane segment spans residues 177 to 197 (GLFLEMFGTAILCLTVLMTAV). The Cytoplasmic segment spans residues 198 to 203 (EKRETN). The chain crosses the membrane as a helical span at residues 204-224 (FMAALPIGISLFIAHVALTAY). Residues 225–248 (TGTGVNPARSLGAAVAARYFPHYH) lie on the Extracellular side of the membrane. The NPA 2 motif lies at 230-232 (NPA). The helical transmembrane segment at 249–269 (WIYWIGTLLGSILAWSVWQLL) threads the bilayer. The Cytoplasmic portion of the chain corresponds to 270-305 (QILDYTTYVTAEKAASTKEKAQKKGETSSSSAVAEV). A compositionally biased stretch (basic and acidic residues) spans 286–295 (TKEKAQKKGE). A disordered region spans residues 286-305 (TKEKAQKKGETSSSSAVAEV). Positions 296–305 (TSSSSAVAEV) are enriched in polar residues.

This sequence belongs to the MIP/aquaporin (TC 1.A.8) family.

It localises to the endoplasmic reticulum membrane. It is found in the cell membrane. Its function is as follows. Water channel required to facilitate the transport of water across membranes. Involved in sporulation, freeze tolerance and osmotolerance. Is non-functional in most laboratory strains. This Saccharomyces cerevisiae (strain YJM789) (Baker's yeast) protein is Aquaporin-1 (AQY1).